The chain runs to 120 residues: Holo-[acyl-carrier-protein] synthase (120 aa).

Mg(2+) contacts are provided by D8 and E58.

This sequence belongs to the P-Pant transferase superfamily. AcpS family. Mg(2+) serves as cofactor.

Its subcellular location is the cytoplasm. It carries out the reaction apo-[ACP] + CoA = holo-[ACP] + adenosine 3',5'-bisphosphate + H(+). Its function is as follows. Transfers the 4'-phosphopantetheine moiety from coenzyme A to a Ser of acyl-carrier-protein. The protein is Holo-[acyl-carrier-protein] synthase of Anoxybacillus flavithermus (strain DSM 21510 / WK1).